Here is a 361-residue protein sequence, read N- to C-terminus: Peptide chain release factor 1 (361 aa).

At Gln-237 the chain carries N5-methylglutamine. The tract at residues 287–306 (KRAAEEASTRKSLVGSGDRS) is disordered.

The protein belongs to the prokaryotic/mitochondrial release factor family. Methylated by PrmC. Methylation increases the termination efficiency of RF1.

The protein localises to the cytoplasm. Peptide chain release factor 1 directs the termination of translation in response to the peptide chain termination codons UAG and UAA. The sequence is that of Peptide chain release factor 1 from Alteromonas mediterranea (strain DSM 17117 / CIP 110805 / LMG 28347 / Deep ecotype).